Here is a 344-residue protein sequence, read N- to C-terminus: Methionine import ATP-binding protein MetN 1 (344 aa).

An ABC transporter domain is found at 2–241 (IELRNLSQRF…PHHEVTRALI (240 aa)). 38 to 45 (GRSGAGKS) contacts ATP.

The protein belongs to the ABC transporter superfamily. Methionine importer (TC 3.A.1.24) family. As to quaternary structure, the complex is composed of two ATP-binding proteins (MetN), two transmembrane proteins (MetI) and a solute-binding protein (MetQ).

Its subcellular location is the cell inner membrane. It carries out the reaction L-methionine(out) + ATP + H2O = L-methionine(in) + ADP + phosphate + H(+). It catalyses the reaction D-methionine(out) + ATP + H2O = D-methionine(in) + ADP + phosphate + H(+). Its function is as follows. Part of the ABC transporter complex MetNIQ involved in methionine import. Responsible for energy coupling to the transport system. The sequence is that of Methionine import ATP-binding protein MetN 1 from Burkholderia lata (strain ATCC 17760 / DSM 23089 / LMG 22485 / NCIMB 9086 / R18194 / 383).